The following is a 353-amino-acid chain: UPF0283 membrane protein YcjF (353 aa).

Over 1–69 (MTEPLKPRID…LRPKRSLWRK (69 aa)) the chain is Periplasmic. The helical transmembrane segment at 70 to 90 (MVMGGLALFGASVVGQGVQWT) threads the bilayer. The Cytoplasmic portion of the chain corresponds to 91–99 (MNAWQTQDW). The chain crosses the membrane as a helical span at residues 100 to 120 (VALGGCAAGALIIGAGVGSVV). At 121-212 (TEWRRLWRLR…ARREISRSAA (92 aa)) the chain is on the periplasmic side. Residues 213–233 (ESTLMIAVSPLALVDMAFIAW) traverse the membrane as a helical segment. The Cytoplasmic segment spans residues 234–353 (RNLRLINRIA…LQKGKTPSEK (120 aa)).

It belongs to the UPF0283 family.

The protein localises to the cell inner membrane. The sequence is that of UPF0283 membrane protein YcjF (ycjF) from Escherichia coli O157:H7.